Here is a 427-residue protein sequence, read N- to C-terminus: Glutamate-1-semialdehyde 2,1-aminomutase (427 aa).

Lys265 is subject to N6-(pyridoxal phosphate)lysine.

The protein belongs to the class-III pyridoxal-phosphate-dependent aminotransferase family. HemL subfamily. As to quaternary structure, homodimer. The cofactor is pyridoxal 5'-phosphate.

The protein localises to the cytoplasm. It catalyses the reaction (S)-4-amino-5-oxopentanoate = 5-aminolevulinate. It functions in the pathway porphyrin-containing compound metabolism; protoporphyrin-IX biosynthesis; 5-aminolevulinate from L-glutamyl-tRNA(Glu): step 2/2. This Pseudomonas savastanoi pv. phaseolicola (strain 1448A / Race 6) (Pseudomonas syringae pv. phaseolicola (strain 1448A / Race 6)) protein is Glutamate-1-semialdehyde 2,1-aminomutase.